The following is a 1912-amino-acid chain: Chromodomain-helicase-DNA-binding protein 4 (1912 aa).

The disordered stretch occupies residues Met1 to Asp157. Acidic residues predominate over residues Asn35 to Glu45. Phosphoserine is present on Ser44. Positions Gly113–Lys131 are enriched in basic residues. Lys133 is covalently cross-linked (Glycyl lysine isopeptide (Lys-Gly) (interchain with G-Cter in SUMO2)). The segment covering Glu135 to Ser145 has biased composition (acidic residues). Glycyl lysine isopeptide (Lys-Gly) (interchain with G-Cter in SUMO2) cross-links involve residues Lys146, Lys179, and Lys297. The disordered stretch occupies residues Ala243–Thr360. The KIKL motif lies at Lys295–Leu298. Ser303 is modified (phosphoserine). A Glycyl lysine isopeptide (Lys-Gly) (interchain with G-Cter in SUMO2) cross-link involves residue Lys304. Phosphoserine occurs at positions 308, 309, 310, and 319. The span at Glu311–Asp323 shows a compositional bias: acidic residues. Over residues Ser340–Lys353 the composition is skewed to basic residues. Thr367 is subject to Phosphothreonine. The PHD-type 1 zinc finger occupies Gln370 to Glu417. At Ser428 the chain carries Phosphoserine. A PHD-type 2 zinc finger spans residues Met449–Pro496. In terms of domain architecture, Chromo 1 spans Thr494 to Lys594. Disordered regions lie at residues Trp510 to Gly537 and Asn578 to Pro603. Residues Pro513–Pro522 show a composition bias toward pro residues. A Phosphoserine modification is found at Ser515. A phosphothreonine mark is found at Thr517 and Thr529. Ser531 carries the post-translational modification Phosphoserine. Residues Lys618 and Lys696 each participate in a glycyl lysine isopeptide (Lys-Gly) (interchain with G-Cter in SUMO2) cross-link. Residues Met622–Leu697 form the Chromo 2 domain. Thr703 is modified (phosphothreonine). Lys711 is covalently cross-linked (Glycyl lysine isopeptide (Lys-Gly) (interchain with G-Cter in SUMO1); alternate). Lys711 is covalently cross-linked (Glycyl lysine isopeptide (Lys-Gly) (interchain with G-Cter in SUMO2); alternate). Residues Arg738–Glu922 enclose the Helicase ATP-binding domain. Residue Asp751 to Thr758 participates in ATP binding. Residues Asp873 to His876 carry the DEAH box motif. Residues Leu1054–Leu1203 form the Helicase C-terminal domain. Ser1209 carries the phosphoserine modification. Residues Lys1212, Lys1228, Lys1239, and Lys1304 each participate in a glycyl lysine isopeptide (Lys-Gly) (interchain with G-Cter in SUMO2) cross-link. 3 positions are modified to phosphoserine: Ser1308, Ser1349, and Ser1370. Disordered regions lie at residues Asn1344–Pro1401 and Glu1525–Asp1562. Residues Lys1528 and Lys1529 each participate in a glycyl lysine isopeptide (Lys-Gly) (interchain with G-Cter in SUMO2) cross-link. A phosphoserine mark is found at Ser1531, Ser1535, and Ser1537. Residues Ser1535–Ser1544 are compositionally biased toward pro residues. Residues Thr1542, Thr1549, and Thr1553 each carry the phosphothreonine modification. Lys1565 participates in a covalent cross-link: Glycyl lysine isopeptide (Lys-Gly) (interchain with G-Cter in SUMO2). The residue at position 1570 (Ser1570) is a Phosphoserine. A compositionally biased stretch (basic and acidic residues) spans Ser1570–Lys1584. Disordered stretches follow at residues Ser1570–Glu1589 and Cys1594–Val1644. Residue Lys1572 forms a Glycyl lysine isopeptide (Lys-Gly) (interchain with G-Cter in SUMO2) linkage. Residue Ser1576 is modified to Phosphoserine. The segment at Ile1577 to Gln1912 is required for interaction with PCNT. Lys1584 is covalently cross-linked (Glycyl lysine isopeptide (Lys-Gly) (interchain with G-Cter in SUMO2)). Position 1602 is a phosphoserine (Ser1602). Positions Glu1603 to Val1644 are enriched in basic and acidic residues. Glycyl lysine isopeptide (Lys-Gly) (interchain with G-Cter in SUMO2) cross-links involve residues Lys1606, Lys1617, and Lys1636. Residue Lys1643 forms a Glycyl lysine isopeptide (Lys-Gly) (interchain with G-Cter in SUMO2); alternate linkage. Position 1643 is an N6-acetyllysine; alternate (Lys1643). A Glycyl lysine isopeptide (Lys-Gly) (interchain with G-Cter in SUMO2) cross-link involves residue Lys1647. Thr1653 is subject to Phosphothreonine. Residues Lys1660 and Lys1670 each participate in a glycyl lysine isopeptide (Lys-Gly) (interchain with G-Cter in SUMO2) cross-link. The residue at position 1679 (Thr1679) is a Phosphothreonine. Glycyl lysine isopeptide (Lys-Gly) (interchain with G-Cter in SUMO2) cross-links involve residues Lys1687 and Lys1865.

Belongs to the SNF2/RAD54 helicase family. Component of the nucleosome remodeling and deacetylase (NuRD) repressor complex, composed of core proteins MTA1, MTA2, MTA3, RBBP4, RBBP7, HDAC1, HDAC2, MBD2, MBD3, and peripherally associated proteins CDK2AP1, CDK2AP2, GATAD2A, GATAD2B, CHD3, CHD4 and CHD5. The exact stoichiometry of the NuRD complex is unknown, and some subunits such as MBD2 and MBD3, GATAD2A and GATAD2B, and CHD3, CHD4 and CHD5 define mutually exclusive NuRD complexes. Interacts with IKFZ1; the interaction is direct and when in part of the NuRD complex. Part of a complex containing ATR and HDAC2. Interacts with HDAC2; the interaction is direct. Interacts with the cohesin complex component RAD21; the interaction is direct. Interacts with the ISWI chromatin remodeling complex component SMARCA5; the interaction is direct. Interacts with ZGPAT; the interaction is direct. Interacts with ZMYND8; the interaction is direct, appears to occur with monomeric ZMYND8, and is increased following DNA damage. Interacts with BCL6. Interacts with BRD4. Interacts with CBX1. Interacts with CBX3. Interacts with CBX5. Interacts with GATAD2A. Interacts with HDAC1. Interacts with KLF1; the interaction depends on sumoylation of KLF1, and leads to its transcriptional repression. Interacts with MTA1. Interacts with PCNT. Interacts with RBBP7. Interacts with SETX. Interacts with TRIM27. Interacts with histone H3. Interacts with histone H4. Does not interact with PWWP2A. Does not interact with PWWP2B. Interacts (via KIKL motif) with BRD3 (via NET domain). It depends on Zn(2+) as a cofactor. As to expression, widely expressed.

Its subcellular location is the nucleus. The protein resides in the cytoplasm. The protein localises to the cytoskeleton. It localises to the microtubule organizing center. It is found in the centrosome. It catalyses the reaction ATP + H2O = ADP + phosphate + H(+). In terms of biological role, ATP-dependent chromatin-remodeling factor that binds and distorts nucleosomal DNA. Acts as a component of the histone deacetylase NuRD complex which participates in the remodeling of chromatin. Localizes to acetylated damaged chromatin in a ZMYND8-dependent manner, to promote transcriptional repression and double-strand break repair by homologous recombination. Involved in neurogenesis. This Homo sapiens (Human) protein is Chromodomain-helicase-DNA-binding protein 4 (CHD4).